The following is a 371-amino-acid chain: Histidinol-phosphate aminotransferase (371 aa).

An N6-(pyridoxal phosphate)lysine modification is found at Lys-228.

This sequence belongs to the class-II pyridoxal-phosphate-dependent aminotransferase family. Histidinol-phosphate aminotransferase subfamily. Pyridoxal 5'-phosphate serves as cofactor.

The enzyme catalyses L-histidinol phosphate + 2-oxoglutarate = 3-(imidazol-4-yl)-2-oxopropyl phosphate + L-glutamate. Its pathway is amino-acid biosynthesis; L-histidine biosynthesis; L-histidine from 5-phospho-alpha-D-ribose 1-diphosphate: step 7/9. This chain is Histidinol-phosphate aminotransferase, found in Methanococcus aeolicus (strain ATCC BAA-1280 / DSM 17508 / OCM 812 / Nankai-3).